The following is an 862-amino-acid chain: Probable linoleate 9S-lipoxygenase 5 (862 aa).

The region spanning 36 to 161 (NDVNASLLDG…KYKSERIFFA (126 aa)) is the PLAT domain. One can recognise a Lipoxygenase domain in the interval 164-862 (AYLPGETPEP…GKGIPNSVSI (699 aa)). Fe cation is bound by residues His523, His528, His714, Asn718, and Ile862.

It belongs to the lipoxygenase family. Monomer. The cofactor is Fe cation. As to expression, not detected in leaves, stems, flowers, roots, tubers and stolons during normal growth and development.

The protein resides in the cytoplasm. The catalysed reaction is (9Z,12Z)-octadecadienoate + O2 = (9S)-hydroperoxy-(10E,12Z)-octadecadienoate. The protein operates within lipid metabolism; oxylipin biosynthesis. Functionally, plant lipoxygenases may be involved in a number of diverse aspects of plant physiology including growth and development, pest resistance, and senescence or responses to wounding. May contribute to cell death during the hypersensitive response (HR) by the massive production of free fatty acid hydroperoxides. Catalyzes the hydroperoxidation of lipids containing a cis,cis-1,4-pentadiene structure. The polypeptide is Probable linoleate 9S-lipoxygenase 5 (LOX1.5) (Solanum tuberosum (Potato)).